The following is a 322-amino-acid chain: Alanine dehydrogenase (322 aa).

The active-site Proton donor/acceptor is Lys65. NAD(+) is bound by residues Arg108, 135 to 136, 157 to 159, 217 to 219, Lys223, and Ser290; these read TQ, DVR, and GAD.

The protein belongs to the ornithine cyclodeaminase/mu-crystallin family. Archaeal alanine dehydrogenase subfamily. As to quaternary structure, homodimer.

The enzyme catalyses L-alanine + NAD(+) + H2O = pyruvate + NH4(+) + NADH + H(+). Catalyzes the NAD(+)-dependent oxidative deamination of L-alanine to pyruvate, and the reverse reaction, the reductive amination of pyruvate. Its physiological role is not known. Cannot use NADP(+) instead of NAD(+) as a cosubstrate. In the deamination direction, can also efficiently use L-2-aminobutyrate as substrate. In the reductive amination direction, also exhibits high activity with 2-oxobutyrate and oxaloacetate as substrate. In contrast to bacterial homologs, does not exhibit any ornithine cyclodeaminase activity. This Archaeoglobus fulgidus (strain ATCC 49558 / DSM 4304 / JCM 9628 / NBRC 100126 / VC-16) protein is Alanine dehydrogenase.